We begin with the raw amino-acid sequence, 583 residues long: MAARRRRSTGGGRARALNESKRVNNGNTAPEDSSPAKKTRRCQRQESKKMPVAGGKANKDRTEDKQDGMPGRSWASKRVSESVKALLLKGKAPVDPECTAKVGKAHVYCEGNDVYDVMLNQTNLQFNNNKYYLIQLLEDDAQRNFSVWMRWGRVGKMGQHSLVACSGNLNKAKEIFQKKFLDKTKNNWEDREKFEKVPGKYDMLQMDYATNTQDEEETKKEESLKSPLKPESQLDLRVQELIKLICNVQAMEEMMMEMKYNTKKAPLGKLTVAQIKAGYQSLKKIEDCIRAGQHGRALMEACNEFYTRIPHDFGLRTPPLIRTQKELSEKIQLLEALGDIEIAIKLVKTELQSPEHPLDQHYRNLHCALRPLDHESYEFKVISQYLQSTHAPTHSDYTMTLLDLFEVEKDGEKEAFREDLHNRMLLWHGSRMSNWVGILSHGLRIAPPEAPITGYMFGKGIYFADMSSKSANYCFASRLKNTGLLLLSEVALGQCNELLEANPKAEGLLQGKHSTKGLGKMAPSSAHFVTLNGSTVPLGPASDTGILNPDGYTLNYNEYIVYNPNQVRMRYLLKVQFNFLQLW.

The interval 1 to 77 (MAARRRRSTG…GMPGRSWASK (77 aa)) is disordered. An N-terminal region (NTR) region spans residues 1–103 (MAARRRRSTG…VDPECTAKVG (103 aa)). Short sequence motifs (nuclear localization signal) lie at residues 21-22 (KR) and 35-40 (PAKKTR). N6-acetyllysine occurs at positions 37 and 38. Basic and acidic residues predominate over residues 57 to 67 (ANKDRTEDKQD). Residues 104-201 (KAHVYCEGND…EKFEKVPGKY (98 aa)) form the WGR domain. Residues Ser226 and Ser232 each carry the phosphoserine modification. Residues 231 to 348 (ESQLDLRVQE…DIEIAIKLVK (118 aa)) enclose the PARP alpha-helical domain. The region spanning 356 to 583 (HPLDQHYRNL…KVQFNFLQLW (228 aa)) is the PARP catalytic domain. Residues 428–430 (HGS), Gly437, Arg444, and Ser470 each bind NAD(+). The active-site For poly [ADP-ribose] polymerase activity is the Glu558.

The protein belongs to the ARTD/PARP family. Component of a base excision repair (BER) complex, containing at least XRCC1, PARP1, POLB and LRIG3. Homo- and heterodimer with PARP1. Interacts (via the PARP catalytic domain) with HPF1. Interacts with core nucleosomes. Auto poly-ADP-ribosylated on serine residues, leading to dissociation of the PARP2-HPF1 complex from chromatin. Poly-ADP-ribosylated by PARP1. Post-translationally, acetylation reduces DNA binding and enzymatic activity. In terms of processing, proteolytically cleaved by caspase-8 (CASP8) in response to apoptosis, leading to its inactivation. As to expression, widely expressed, mainly in actively dividing tissues. The highest levels are in the brain, heart, pancreas, skeletal muscle and testis; also detected in kidney, liver, lung, placenta, ovary and spleen; levels are low in leukocytes, colon, small intestine, prostate and thymus.

The protein localises to the nucleus. The protein resides in the chromosome. It carries out the reaction NAD(+) + (ADP-D-ribosyl)n-acceptor = nicotinamide + (ADP-D-ribosyl)n+1-acceptor + H(+).. The enzyme catalyses L-seryl-[protein] + NAD(+) = O-(ADP-D-ribosyl)-L-seryl-[protein] + nicotinamide + H(+). It catalyses the reaction L-aspartyl-[protein] + NAD(+) = 4-O-(ADP-D-ribosyl)-L-aspartyl-[protein] + nicotinamide. The catalysed reaction is L-glutamyl-[protein] + NAD(+) = 5-O-(ADP-D-ribosyl)-L-glutamyl-[protein] + nicotinamide. With respect to regulation, ADP-ribosyltransferase activity is regulated via an allosteric activation mechanism. In absence of activation signal, PARP2 is autoinhibited by the PARP alpha-helical domain (also named HD region), which prevents effective NAD(+)-binding. Activity is highly stimulated by signals, which unfold the PARP alpha-helical domain, relieving autoinhibition. Poly-ADP-ribosyltransferase activity is tightly regulated and PARP2 is removed from damaged chromatin following initial poly-ADP-ribosylation of chromatin to avoid prolonged residence (trapping) that has cytotoxic consequences. CHD1L promotes PARP2 removal from chromatin. ADP-ribosyltransferase activity is inhibited by a number of PARP inhibitors (PARPi) compounds, that are used the treatment of breast or ovarian cancers that have defects in DNA repair by homologous recombination. PARPi molecules (niraparib, talazoparib, and, to a lesser extent, olaparib) also trap PARP2 at DNA damage sites. In terms of biological role, poly-ADP-ribosyltransferase that mediates poly-ADP-ribosylation of proteins and plays a key role in DNA repair. Mediates glutamate, aspartate or serine ADP-ribosylation of proteins: the ADP-D-ribosyl group of NAD(+) is transferred to the acceptor carboxyl group of target residues and further ADP-ribosyl groups are transferred to the 2'-position of the terminal adenosine moiety, building up a polymer with an average chain length of 20-30 units. Serine ADP-ribosylation of proteins constitutes the primary form of ADP-ribosylation of proteins in response to DNA damage. Mediates glutamate and aspartate ADP-ribosylation of target proteins in absence of HPF1. Following interaction with HPF1, catalyzes serine ADP-ribosylation of target proteins; HPF1 conferring serine specificity by completing the PARP2 active site. PARP2 initiates the repair of double-strand DNA breaks: recognizes and binds DNA breaks within chromatin and recruits HPF1, licensing serine ADP-ribosylation of target proteins, such as histones, thereby promoting decompaction of chromatin and the recruitment of repair factors leading to the reparation of DNA strand breaks. HPF1 initiates serine ADP-ribosylation but restricts the polymerase activity of PARP2 in order to limit the length of poly-ADP-ribose chains. Specifically mediates formation of branched poly-ADP-ribosylation. Branched poly-ADP-ribose chains are specifically recognized by some factors, such as APLF. In addition to proteins, also able to ADP-ribosylate DNA: preferentially acts on 5'-terminal phosphates at DNA strand breaks termini in nicked duplex. The protein is Poly [ADP-ribose] polymerase 2 of Homo sapiens (Human).